The primary structure comprises 363 residues: Ribonuclease P protein subunit p40 (363 aa).

As to quaternary structure, component of nuclear RNase P and RNase MRP ribonucleoproteins. RNase P consists of a catalytic RNA moiety and about 10 protein subunits; POP1, POP4, POP5, POP7, RPP14, RPP21, RPP25, RPP30, RPP38 and RPP40. Within the RNase P complex, POP1, POP7 and RPP25 form the 'finger' subcomplex, POP5, RPP14, RPP40 and homodimeric RPP30 form the 'palm' subcomplex, and RPP21, POP4 and RPP38 form the 'wrist' subcomplex. All subunits of the RNase P complex interact with the catalytic RNA. Several subunits of RNase P are also part of the RNase MRP complex. RNase MRP consists of a catalytic RNA moiety and about 8 protein subunits; POP1, POP7, RPP25, RPP30, RPP38, RPP40 and possibly also POP4 and POP5.

Its subcellular location is the nucleus. It localises to the nucleolus. Functionally, component of ribonuclease P, a ribonucleoprotein complex that generates mature tRNA molecules by cleaving their 5'-ends. Also a component of the MRP ribonuclease complex, which cleaves pre-rRNA sequences. The chain is Ribonuclease P protein subunit p40 (Rpp40) from Rattus norvegicus (Rat).